The primary structure comprises 358 residues: Short chain dehydrogenase sor7 (358 aa).

A disordered region spans residues Met-1–Gly-22. NADP(+)-binding residues include Leu-34, Asp-88, Asn-115, Tyr-206, Lys-210, Val-238, and Thr-240. The active-site Proton donor is the Tyr-206. The active-site Lowers pKa of active site Tyr is Lys-210.

The protein belongs to the short-chain dehydrogenases/reductases (SDR) family.

It functions in the pathway secondary metabolite biosynthesis. Its function is as follows. Short chain dehydrogenase; part of the SOR gene cluster that mediates the biosynthesis of sorbicillinoids, a diverse group of yellow secondary metabolites that restrict growth of competing pathogenic fungi but not of bacteria. Sorbicillinoids biosynthesis requires the action of two PKSs. The SOR cluster is required for the production of trichodimerol and dihydrotrichotetronin, with sor2 being sufficient for production of trichodimerol, but not dihydrotrichotetronin in the light. Sor1 iteratively combines three acetyl units and the growing chain is modified by the ketoacyl reductase subunit, and optional by the enoyl reductase subunit in the second cycle. The polyketide is then handed over to the PKS sor2, which adds three more acetyl units, and two methyl groups. Sor2 releases an aldehyde, which undergoes spontaneous cyclization resulting in the formation of sorbicillin or 2',3'-dihydrosorbicillin. The monooxygenase sor5 oxidizes sorbicillin and 2',3'-dihydrosorbicillin to 2',3'-dihydrosorbicillinol and sorbicillinol, respectively. The oxidoreductase sor8 further converts sorbicillinol into oxosorbicillinol. Sorbicillinol is the building block for the other sorbicillinoids such as disorbicillinol, bisvertinolon, dihydrobisvertinolone, and dihydrotrichotetronine. This is Short chain dehydrogenase sor7 from Hypocrea jecorina (strain QM6a) (Trichoderma reesei).